The following is a 566-amino-acid chain: Membrane protein insertase YidC (566 aa).

A helical transmembrane segment spans residues 6–26 (NLLLLALLFVSFLLYTAWVEE). A disordered region spans residues 30 to 80 (QVAPQVQTEQVDSSVPASVASSANSANLSDGVPNSPQQSSTDATSTELPAS). Residues 31-41 (VAPQVQTEQVD) are compositionally biased toward polar residues. Positions 42-58 (SSVPASVASSANSANLS) are enriched in low complexity. Polar residues predominate over residues 61-80 (VPNSPQQSSTDATSTELPAS). A run of 4 helical transmembrane segments spans residues 356 to 376 (LLLF…LITF), 433 to 453 (LGGC…YWSL), 471 to 491 (LSVQ…MFFI), and 510 to 530 (FMPV…VLYW).

This sequence belongs to the OXA1/ALB3/YidC family. Type 1 subfamily. Interacts with the Sec translocase complex via SecD. Specifically interacts with transmembrane segments of nascent integral membrane proteins during membrane integration.

The protein resides in the cell inner membrane. Its function is as follows. Required for the insertion and/or proper folding and/or complex formation of integral membrane proteins into the membrane. Involved in integration of membrane proteins that insert both dependently and independently of the Sec translocase complex, as well as at least some lipoproteins. Aids folding of multispanning membrane proteins. This is Membrane protein insertase YidC from Psychromonas ingrahamii (strain DSM 17664 / CCUG 51855 / 37).